The chain runs to 243 residues: Adenylate dimethylallyltransferase (243 aa).

The catalysed reaction is dimethylallyl diphosphate + AMP = N(6)-(dimethylallyl)adenosine 5'-phosphate + diphosphate. Functionally, transfers dimethylallyl groups to AMP as part of the biosynthesis of cytokinin phytohormones. This Agrobacterium tumefaciens (strain T37) protein is Adenylate dimethylallyltransferase (tzs).